The chain runs to 106 residues: Thioredoxin (106 aa).

The 106-residue stretch at G1–L106 folds into the Thioredoxin domain. The cysteines at positions 31 and 34 are disulfide-linked.

It belongs to the thioredoxin family.

Functionally, participates in various redox reactions through the reversible oxidation of its active center dithiol to a disulfide and catalyzes dithiol-disulfide exchange reactions. The chain is Thioredoxin (trxA) from Kitasatospora aureofaciens (Streptomyces aureofaciens).